We begin with the raw amino-acid sequence, 362 residues long: N5-carboxyaminoimidazole ribonucleotide synthase (362 aa).

ATP is bound by residues R108, K148, 153–159 (GYDGKGQ), 185–188 (EGFV), E193, H216, and 270–271 (NE). An ATP-grasp domain is found at 112 to 300 (KQFLNESGIE…QFEQHIRAVA (189 aa)).

The protein belongs to the PurK/PurT family. As to quaternary structure, homodimer.

The enzyme catalyses 5-amino-1-(5-phospho-beta-D-ribosyl)imidazole + hydrogencarbonate + ATP = 5-carboxyamino-1-(5-phospho-D-ribosyl)imidazole + ADP + phosphate + 2 H(+). The protein operates within purine metabolism; IMP biosynthesis via de novo pathway; 5-amino-1-(5-phospho-D-ribosyl)imidazole-4-carboxylate from 5-amino-1-(5-phospho-D-ribosyl)imidazole (N5-CAIR route): step 1/2. Catalyzes the ATP-dependent conversion of 5-aminoimidazole ribonucleotide (AIR) and HCO(3)(-) to N5-carboxyaminoimidazole ribonucleotide (N5-CAIR). The protein is N5-carboxyaminoimidazole ribonucleotide synthase of Brucella melitensis biotype 1 (strain ATCC 23456 / CCUG 17765 / NCTC 10094 / 16M).